Here is a 380-residue protein sequence, read N- to C-terminus: Cysteine protease ATG4A (380 aa).

Catalysis depends on cysteine 60, which acts as the Nucleophile. Active-site residues include aspartate 262 and histidine 264. Residues 375–378 (FEIL) carry the LIR motif.

Belongs to the peptidase C54 family.

Its subcellular location is the cytoplasm. It catalyses the reaction [protein]-C-terminal L-amino acid-glycyl-phosphatidylethanolamide + H2O = [protein]-C-terminal L-amino acid-glycine + a 1,2-diacyl-sn-glycero-3-phosphoethanolamine. In terms of biological role, cysteine protease that plays a key role in autophagy by mediating both proteolytic activation and delipidation of ATG8 family proteins. The protease activity is required for proteolytic activation of ATG8 family proteins: cleaves the C-terminal amino acid of ATG8 proteins to reveal a C-terminal glycine. Exposure of the glycine at the C-terminus is essential for ATG8 proteins conjugation to phosphatidylethanolamine (PE) and insertion to membranes, which is necessary for autophagy. Protease activity is also required to counteract formation of high-molecular weight conjugates of ATG8 proteins (ATG8ylation): acts as a deubiquitinating-like enzyme that removes ATG8 conjugated to other proteins, such as ATG3. In addition to the protease activity, also mediates delipidation of ATG8 family proteins. Catalyzes delipidation of PE-conjugated forms of ATG8 proteins during macroautophagy. In Gallus gallus (Chicken), this protein is Cysteine protease ATG4A.